Reading from the N-terminus, the 539-residue chain is Chaperone Ric-8A (539 aa).

Residues 507 to 539 are disordered; that stretch reads MGITPSGNLAPMENAIRDMADERSSSDSDLGLD. Residues 521 to 532 are compositionally biased toward basic and acidic residues; that stretch reads AIRDMADERSSS.

It belongs to the synembryn family.

It is found in the cytoplasm. Its subcellular location is the cell cortex. Functionally, chaperone that specifically binds and folds nascent G alpha proteins prior to G protein heterotrimer formation, promoting their stability and activity: folds GNAI1, GNAO1, GNA13 and GNAQ. Does not fold G(s) G-alpha proteins GNAS nor GNAL. Also acts as a guanine nucleotide exchange factor (GEF) for G alpha proteins by stimulating exchange of bound GDP for free GTP. This chain is Chaperone Ric-8A (RIC8A), found in Gallus gallus (Chicken).